Consider the following 302-residue polypeptide: Endochitinase 4 (302 aa).

An N-terminal signal peptide occupies residues 1-18 (EFTALSLLFSLLLLTASA). A Chitin-binding type-1 domain is found at 19–60 (EQCGKQAGGARCAAGLCCSNFGWCGNTNDYCGPGKCQSQCPS). Disulfide bonds link Cys21-Cys36, Cys30-Cys42, Cys35-Cys49, and Cys54-Cys58. Residues 59-79 (PSGPSPKPPTPGPGPSGGDIG) form a disordered region. Residues 61 to 72 (GPSPKPPTPGPG) are compositionally biased toward pro residues. The Proton donor role is filled by Glu144. Cys162 and Cys182 form a disulfide bridge.

Belongs to the glycosyl hydrolase 19 family. Chitinase class I subfamily.

It is found in the vacuole. The enzyme catalyses Random endo-hydrolysis of N-acetyl-beta-D-glucosaminide (1-&gt;4)-beta-linkages in chitin and chitodextrins.. Its function is as follows. Defense against chitin-containing fungal pathogens. This Solanum tuberosum (Potato) protein is Endochitinase 4 (CHTB4).